We begin with the raw amino-acid sequence, 303 residues long: Nod factor export ATP-binding protein I (303 aa).

The ABC transporter domain occupies 5-235 (LQMRNVRKLY…EIGCDVVEVY (231 aa)). 37 to 44 (GPNGAGKT) is an ATP binding site.

The protein belongs to the ABC transporter superfamily. Lipooligosaccharide exporter (TC 3.A.1.102) family. In terms of assembly, the complex is composed of two ATP-binding proteins (NodI) and two transmembrane proteins (NodJ).

Its subcellular location is the cell inner membrane. In terms of biological role, part of the ABC transporter complex NodIJ involved in the export of the nodulation factors (Nod factors), the bacterial signal molecules that induce symbiosis and subsequent nodulation induction. Nod factors are LCO (lipo-chitin oligosaccharide), a modified beta-1,4-linked N-acetylglucosamine oligosaccharide. This subunit is responsible for energy coupling to the transport system. The polypeptide is Nod factor export ATP-binding protein I (Cupriavidus metallidurans (strain ATCC 43123 / DSM 2839 / NBRC 102507 / CH34) (Ralstonia metallidurans)).